We begin with the raw amino-acid sequence, 156 residues long: MRSSSKQEELVKAFKALLKEEKFSSQGEIVLALQEQGFENINQSKVSRMLTKFGAVRTRNAKMEMVYCLPAELGVPTTSSPLKNLVLDIDYNDAVVVIHTSPGAAQLIARLLDSLGKSEGILGTIAGDDTIFTTPANGFSVKDLYEAILMLFEQEL.

Belongs to the ArgR family.

Its subcellular location is the cytoplasm. It participates in amino-acid biosynthesis; L-arginine biosynthesis [regulation]. Its function is as follows. Regulates arginine biosynthesis genes. The protein is Arginine repressor of Enterobacter sp. (strain 638).